The sequence spans 285 residues: Nickel/cobalt efflux system RcnA (285 aa).

Topologically, residues 1 to 10 (MTEFTTLLQQ) are periplasmic. A helical membrane pass occupies residues 11-31 (GSAWFFIPSAILLGALHGLEP). The Cytoplasmic portion of the chain corresponds to 32 to 56 (GHSKTMMAAFIIAIKGTIKQAVMLG). Residues 57 to 77 (LAATISHTAVVWLIAFGGMVI) traverse the membrane as a helical segment. Residues 78–86 (SKRFTAQSA) are Periplasmic-facing. The chain crosses the membrane as a helical span at residues 87-107 (EPWLQLISAVIIISTAFWMFW). Residues 108 to 185 (RTWRGERNWL…FDGREVTNWQ (78 aa)) are Cytoplasmic-facing. A disordered region spans residues 127-164 (HEHHHHDHEHHQDHDHDHDHEHHHHHEHGDNEEYQDAH). Basic and acidic residues-rich tracts occupy residues 135 to 146 (EHHQDHDHDHDH) and 153 to 164 (EHGDNEEYQDAH). Residues 186–206 (ILLFGLTGGLIPCPAAITVLL) traverse the membrane as a helical segment. Topologically, residues 207–220 (ICIQLKALTLGATL) are periplasmic. The helical transmembrane segment at 221–241 (VVSFSIGLALTLVTVGVGAAI) threads the bilayer. At 242-262 (SVQQVAKRWSGFNTLAKRAPY) the chain is on the cytoplasmic side. The helical transmembrane segment at 263-283 (FSSLLIGLVGVYMGVHGFMGI) threads the bilayer. Residues 284-285 (MR) lie on the Periplasmic side of the membrane.

Belongs to the NiCoT transporter (TC 2.A.52) family. RcnA subfamily.

Its subcellular location is the cell inner membrane. In terms of biological role, efflux system for nickel and cobalt. In Shigella dysenteriae serotype 1 (strain Sd197), this protein is Nickel/cobalt efflux system RcnA (rcnA).